Here is a 153-residue protein sequence, read N- to C-terminus: 6,7-dimethyl-8-ribityllumazine synthase (153 aa).

5-amino-6-(D-ribitylamino)uracil contacts are provided by residues Phe-22, 56–58 (AFE), and 80–82 (TVI). Residue 85–86 (ST) participates in (2S)-2-hydroxy-3-oxobutyl phosphate binding. His-88 (proton donor) is an active-site residue. A 5-amino-6-(D-ribitylamino)uracil-binding site is contributed by Phe-113. Arg-127 serves as a coordination point for (2S)-2-hydroxy-3-oxobutyl phosphate.

It belongs to the DMRL synthase family. Forms an icosahedral capsid composed of 60 subunits, arranged as a dodecamer of pentamers.

The enzyme catalyses (2S)-2-hydroxy-3-oxobutyl phosphate + 5-amino-6-(D-ribitylamino)uracil = 6,7-dimethyl-8-(1-D-ribityl)lumazine + phosphate + 2 H2O + H(+). It functions in the pathway cofactor biosynthesis; riboflavin biosynthesis; riboflavin from 2-hydroxy-3-oxobutyl phosphate and 5-amino-6-(D-ribitylamino)uracil: step 1/2. Its function is as follows. Catalyzes the formation of 6,7-dimethyl-8-ribityllumazine by condensation of 5-amino-6-(D-ribitylamino)uracil with 3,4-dihydroxy-2-butanone 4-phosphate. This is the penultimate step in the biosynthesis of riboflavin. The polypeptide is 6,7-dimethyl-8-ribityllumazine synthase (Actinobacillus pleuropneumoniae serotype 5b (strain L20)).